We begin with the raw amino-acid sequence, 494 residues long: MDLSNNTMSLSVRTPGLSRRLSSQSVIGRPRGMSASSVGSGYGGSAFGFGASCGGGFSAASMFGSSSGFGGGSGSSMAGGLGAGYGRALGGGSFGGLGMGFGGSPGGGSLGILSGNDGGLLSGSEKETMQNLNDRLASYLDKVRALEEANTELENKIREWYETRGTGTADASQSDYSKYYPLIEDLRNKIISASIGNAQLLLQIDNARLAAEDFRMKYENELALRQGVEADINGLRRVLDELTLTRTDLEMQIESLNEELAYMKKNHEDELQSFRVGGPGEVSVEMDAAPGVDLTRLLNDMRAQYETIAEQNRKDAEAWFIEKSGELRKEISTNTEQLQSSKSEVTDLRRAFQNLEIELQSQLAMKKSLEDSLAEAEGDYCAQLSQVQQLISNLEAQLLQVRADAERQNVDHQRLLNVKARLELEIETYRRLLDGEAQGDGLEESLFVTDSKSQAQSTDSSKDPTKTRKIKTVVQEMVNGEVVSSQVQEIEELM.

Residues 1 to 12 show a composition bias toward polar residues; it reads MDLSNNTMSLSV. Residues 1 to 32 form a disordered region; that stretch reads MDLSNNTMSLSVRTPGLSRRLSSQSVIGRPRG. The segment at 1–124 is head; it reads MDLSNNTMSL…GNDGGLLSGS (124 aa). Residues 125–160 are coil 1A; it reads EKETMQNLNDRLASYLDKVRALEEANTELENKIREW. The 316-residue stretch at 125 to 440 folds into the IF rod domain; it reads EKETMQNLND…RLLDGEAQGD (316 aa). The linker 1 stretch occupies residues 164–182; sequence RGTGTADASQSDYSKYYPL. The coil 1B stretch occupies residues 183 to 274; the sequence is IEDLRNKIIS…KNHEDELQSF (92 aa). The linker 12 stretch occupies residues 275 to 297; sequence RVGGPGEVSVEMDAAPGVDLTRL. The coil 2 stretch occupies residues 298–435; sequence LNDMRAQYET…IETYRRLLDG (138 aa). The tract at residues 436–494 is tail; that stretch reads EAQGDGLEESLFVTDSKSQAQSTDSSKDPTKTRKIKTVVQEMVNGEVVSSQVQEIEELM. The disordered stretch occupies residues 446 to 468; the sequence is LFVTDSKSQAQSTDSSKDPTKTR. Polar residues predominate over residues 448–459; sequence VTDSKSQAQSTD.

The protein belongs to the intermediate filament family. Heterotetramer of two type I and two type II keratins. Keratin-3 associates with keratin-12. As to expression, expressed in the corneal epithelium (at protein level).

Involved in corneal epithelium organization, integrity and corneal keratin expression. This is Keratin, type I cytoskeletal 12 (KRT12) from Homo sapiens (Human).